An 865-amino-acid polypeptide reads, in one-letter code: High affinity cAMP-specific and IBMX-insensitive 3',5'-cyclic phosphodiesterase 8B (865 aa).

2 disordered regions span residues 17–40 (CRDSDESNSPRQTSSVSQGPTAPL) and 52–92 (AMPP…TCRG). Residues 23 to 36 (SNSPRQTSSVSQGP) show a composition bias toward polar residues. Low complexity predominate over residues 75 to 90 (GSGSSTGSSGPATTTC). The 72-residue stretch at 247 to 318 (ACNSVFTALD…DTINTCIKKG (72 aa)) folds into the PAS domain. The segment at 373–415 (IHRDSGDNSQTEPHSFRHKSRRKESIDVKSISSRGSDAPSLQN) is disordered. The span at 402 to 415 (SISSRGSDAPSLQN) shows a compositional bias: polar residues. At Ser-497 the chain carries Phosphoserine. The region spanning 519 to 855 (TINDVPPSIA…KHWKTLDDLK (337 aa)) is the PDEase domain. His-595 acts as the Proton donor in catalysis. A divalent metal cation is bound by residues His-599, His-635, and Asp-636. Phosphoserine is present on residues Ser-731 and Ser-734. Asp-761 provides a ligand contact to a divalent metal cation.

This sequence belongs to the cyclic nucleotide phosphodiesterase family. PDE8 subfamily. The cofactor is a divalent metal cation. Widely expressed.

It catalyses the reaction 3',5'-cyclic AMP + H2O = AMP + H(+). It participates in purine metabolism; 3',5'-cyclic AMP degradation; AMP from 3',5'-cyclic AMP: step 1/1. Hydrolyzes the second messenger cAMP, which is a key regulator of many important physiological processes. May be involved in specific signaling in the thyroid gland. The sequence is that of High affinity cAMP-specific and IBMX-insensitive 3',5'-cyclic phosphodiesterase 8B (Pde8b) from Mus musculus (Mouse).